Consider the following 123-residue polypeptide: uncharacterized protein (123 aa).

A compositionally biased stretch (polar residues) spans 1–12 (MALNNVSLSSGD). 2 disordered regions span residues 1 to 25 (MALN…SHGD) and 53 to 91 (PRQA…RFSP). Over residues 61–82 (VRAESRRVDGGGRSPREPDGRG) the composition is skewed to basic and acidic residues.

This is an uncharacterized protein from Homo sapiens (Human).